The chain runs to 173 residues: C-phycocyanin beta subunit (173 aa).

At Asn73 the chain carries N4-methylasparagine. Positions 83 and 154 each coordinate (2R,3E)-phycocyanobilin.

It belongs to the phycobiliprotein family. As to quaternary structure, heterodimer of an alpha and a beta subunit. Heterodimers further assemble into trimers and the trimers into hexamers. Post-translationally, contains two covalently linked bilin chromophores.

The protein localises to the cellular thylakoid membrane. In terms of biological role, light-harvesting photosynthetic bile pigment-protein from the phycobiliprotein complex (phycobilisome, PBS). Phycocyanin is the major phycobiliprotein in the PBS rod. In Mastigocladus laminosus (Fischerella sp.), this protein is C-phycocyanin beta subunit (cpcB).